The following is a 557-amino-acid chain: MRTSQYLLSTIKEIPLDAEVISHQLMLRAGIIRQLASGLYTWLPTGLRILRKVENIVREEMNNIGAIEVSMPIVQPANLWLESGRWGQYGPELLRFTDRSTRQFLLGPTHEEVITDLIRNEVKSYKQLPLNLFQIKTKFRDEVRPRYGVMRSREFIMKDAYSFHTSQQSLQATYDLMYYTYNTIFNRIGLDVRTVQADPGSIGGHLSHEFLALVSNYEDQMLLIDASHKATERNLPSENLQLVDAPGIYTLTELVKLFNLPIEKIAQIIIVHAQQNALYPLVALMVRGDHSINYAQVEKLPQVASPLVFATEDEIRLAIGVGSSSLGPINLPLPLIIDHSVAVMSDFVAGANIDGKYFFGINWERDLSLPEVANLTNQNISVSQPQRLHRTNWIEVGHIFQLGSKYSKVMKATVQGEDGNNMIMTMGCYGIGITRVVAAAIDKYNDKQGLLLPVSIAPFQVAIIPINLHKSLLVQTVAEQLYNQLSIRKIDVLLDDRKERPGVMFADIELIGIPHIIIIGDRNLAVQKIEYKNRSNGEKKLMNLSIIVDWIVAKLNS.

Belongs to the class-II aminoacyl-tRNA synthetase family. ProS type 1 subfamily. Homodimer.

It is found in the cytoplasm. It carries out the reaction tRNA(Pro) + L-proline + ATP = L-prolyl-tRNA(Pro) + AMP + diphosphate. Catalyzes the attachment of proline to tRNA(Pro) in a two-step reaction: proline is first activated by ATP to form Pro-AMP and then transferred to the acceptor end of tRNA(Pro). As ProRS can inadvertently accommodate and process non-cognate amino acids such as alanine and cysteine, to avoid such errors it has two additional distinct editing activities against alanine. One activity is designated as 'pretransfer' editing and involves the tRNA(Pro)-independent hydrolysis of activated Ala-AMP. The other activity is designated 'posttransfer' editing and involves deacylation of mischarged Ala-tRNA(Pro). The misacylated Cys-tRNA(Pro) is not edited by ProRS. In Baumannia cicadellinicola subsp. Homalodisca coagulata, this protein is Proline--tRNA ligase.